Here is a 388-residue protein sequence, read N- to C-terminus: 4-hydroxy-3-methylbut-2-en-1-yl diphosphate synthase (flavodoxin) (388 aa).

Residues 1 to 22 (MTSVNLGMPAAPQPVLSPRRKT) form a disordered region. Positions 281, 284, 316, and 323 each coordinate [4Fe-4S] cluster.

This sequence belongs to the IspG family. [4Fe-4S] cluster is required as a cofactor.

It carries out the reaction (2E)-4-hydroxy-3-methylbut-2-enyl diphosphate + oxidized [flavodoxin] + H2O + 2 H(+) = 2-C-methyl-D-erythritol 2,4-cyclic diphosphate + reduced [flavodoxin]. The protein operates within isoprenoid biosynthesis; isopentenyl diphosphate biosynthesis via DXP pathway; isopentenyl diphosphate from 1-deoxy-D-xylulose 5-phosphate: step 5/6. In terms of biological role, converts 2C-methyl-D-erythritol 2,4-cyclodiphosphate (ME-2,4cPP) into 1-hydroxy-2-methyl-2-(E)-butenyl 4-diphosphate. The chain is 4-hydroxy-3-methylbut-2-en-1-yl diphosphate synthase (flavodoxin) from Kocuria rhizophila (strain ATCC 9341 / DSM 348 / NBRC 103217 / DC2201).